We begin with the raw amino-acid sequence, 218 residues long: Large ribosomal subunit protein uL16 (218 aa).

Belongs to the universal ribosomal protein uL16 family. Component of the large ribosomal subunit. Mature ribosomes consist of a small (40S) and a large (60S) subunit. The 40S subunit contains about 33 different proteins and 1 molecule of RNA (18S). The 60S subunit contains about 49 different proteins and 3 molecules of RNA (28S, 5.8S and 5S).

This Drosophila melanogaster (Fruit fly) protein is Large ribosomal subunit protein uL16 (RpL10).